A 622-amino-acid polypeptide reads, in one-letter code: Interleukin-1 receptor-associated kinase-like 2 (622 aa).

A Death domain is found at 13 to 94; it reads LDDLCRNIDT…RAAQIVLSWK (82 aa). The region spanning 208–473 is the Protein kinase domain; the sequence is FDQSHRISEG…LPEACEEAWA (266 aa). ATP contacts are provided by residues 214–222, K235, and 335–338; these read ISEGTFADI and KSAN. Disordered stretches follow at residues 511–532 and 553–591; these read RVSE…VDNS and LFTG…ETSW. Polar residues-rich tracts occupy residues 513–523 and 561–590; these read SEATGSSSNTP and QPST…TETS.

Belongs to the protein kinase superfamily. TKL Ser/Thr protein kinase family. Pelle subfamily. Interacts with MYD88. IL-1 stimulation leads to the formation of a signaling complex which dissociates from the IL-1 receptor following the binding of PELI1. Ubiquitously expressed, with a higher expression observed in brain, spleen and liver. Isoform 1 and isoform 2 are considered agonist and isoform 3 and isoform 4 are considered antagonist.

Binds to the IL-1 type I receptor following IL-1 engagement, triggering intracellular signaling cascades leading to transcriptional up-regulation and mRNA stabilization. The polypeptide is Interleukin-1 receptor-associated kinase-like 2 (Irak2) (Mus musculus (Mouse)).